A 146-amino-acid polypeptide reads, in one-letter code: Lipoprotein signal peptidase (146 aa).

3 helical membrane-spanning segments follow: residues 6-26, 50-70, and 82-104; these read IFLLVAIGIFIIDQNIKTLFL, MFAFIGPYLKWVQALLIGGIL, and YAFPAGLLIGGALGNLYDRFVHA. Residues D108 and D125 contribute to the active site. A helical transmembrane segment spans residues 123-143; it reads FADVAIDLAVAWILIMVYFFP.

Belongs to the peptidase A8 family.

Its subcellular location is the cell inner membrane. The enzyme catalyses Release of signal peptides from bacterial membrane prolipoproteins. Hydrolyzes -Xaa-Yaa-Zaa-|-(S,diacylglyceryl)Cys-, in which Xaa is hydrophobic (preferably Leu), and Yaa (Ala or Ser) and Zaa (Gly or Ala) have small, neutral side chains.. It functions in the pathway protein modification; lipoprotein biosynthesis (signal peptide cleavage). In terms of biological role, this protein specifically catalyzes the removal of signal peptides from prolipoproteins. The protein is Lipoprotein signal peptidase of Sulfurovum sp. (strain NBC37-1).